We begin with the raw amino-acid sequence, 574 residues long: MEDVNQEKKKVPPMSEPERSTPIKTTGGQYRFCKSCVEGSSCRTVRSRTKLMNVLIERGRPHEAQTVFKTLAETGHRPSLISYTTLLAAMTVQKQYGSISSIVSEVEQSGTKLDSIFFNAVINAFSESGNMEDAVQALLKMKELGLNPTTSTYNTLIKGYGIAGKPERSSELLDLMLEEGNVDVGPNIRTFNVLVQAWCKKKKVEEAWEVVKKMEECGVRPDTVTYNTIATCYVQKGETVRAESEVVEKMVMKEKAKPNGRTCGIVVGGYCREGRVRDGLRFVRRMKEMRVEANLVVFNSLINGFVEVMDRDGIDEVLTLMKECNVKADVITYSTVMNAWSSAGYMEKAAQVFKEMVKAGVKPDAHAYSILAKGYVRAKEPKKAEELLETLIVESRPNVVIFTTVISGWCSNGSMDDAMRVFNKMCKFGVSPNIKTFETLMWGYLEVKQPWKAEEVLQMMRGCGVKPENSTFLLLAEAWRVAGLTDESNKAINALKCKDIEIAKLEKLYQKQSSGSSFNLLQIPVGKRELPTAKAMNLSACKLGARVPIICQKQSQAQFGISGQFVHSCTVFLS.

Residues 1–21 show a composition bias toward basic and acidic residues; the sequence is MEDVNQEKKKVPPMSEPERST. Residues 1 to 25 form a disordered region; the sequence is MEDVNQEKKKVPPMSEPERSTPIKT. PPR repeat units follow at residues 44 to 78, 79 to 113, 114 to 148, 149 to 183, 187 to 221, 222 to 258, 259 to 293, 294 to 328, 329 to 363, 364 to 394, 398 to 432, and 433 to 467; these read TVRS…GHRP, SLIS…GTKL, DSIF…GLNP, TTST…GNVD, NIRT…GVRP, DTVT…KAKP, NGRT…RVEA, NLVV…NVKA, DVIT…GVKP, DAHA…LIVE, NVVI…GVSP, and NIKT…GVKP.

This sequence belongs to the PPR family. P subfamily.

The chain is Pentatricopeptide repeat-containing protein At5g25630 from Arabidopsis thaliana (Mouse-ear cress).